Consider the following 600-residue polypeptide: Elongation factor 4 (600 aa).

Positions 5–187 (KYIRNFSIIA…AIVSKLPPPK (183 aa)) constitute a tr-type G domain. GTP-binding positions include 17–22 (DHGKST) and 134–137 (NKLD).

This sequence belongs to the TRAFAC class translation factor GTPase superfamily. Classic translation factor GTPase family. LepA subfamily.

Its subcellular location is the cell inner membrane. The catalysed reaction is GTP + H2O = GDP + phosphate + H(+). Functionally, required for accurate and efficient protein synthesis under certain stress conditions. May act as a fidelity factor of the translation reaction, by catalyzing a one-codon backward translocation of tRNAs on improperly translocated ribosomes. Back-translocation proceeds from a post-translocation (POST) complex to a pre-translocation (PRE) complex, thus giving elongation factor G a second chance to translocate the tRNAs correctly. Binds to ribosomes in a GTP-dependent manner. The sequence is that of Elongation factor 4 from Rickettsia rickettsii (strain Iowa).